Here is a 513-residue protein sequence, read N- to C-terminus: Putative thymidine phosphorylase (513 aa).

The protein belongs to the thymidine/pyrimidine-nucleoside phosphorylase family. Type 2 subfamily.

It catalyses the reaction thymidine + phosphate = 2-deoxy-alpha-D-ribose 1-phosphate + thymine. The chain is Putative thymidine phosphorylase from Bradyrhizobium diazoefficiens (strain JCM 10833 / BCRC 13528 / IAM 13628 / NBRC 14792 / USDA 110).